Reading from the N-terminus, the 314-residue chain is tRNA pseudouridine synthase B (314 aa).

Residue aspartate 47 is the Nucleophile of the active site.

The protein belongs to the pseudouridine synthase TruB family. Type 1 subfamily.

The enzyme catalyses uridine(55) in tRNA = pseudouridine(55) in tRNA. Functionally, responsible for synthesis of pseudouridine from uracil-55 in the psi GC loop of transfer RNAs. The chain is tRNA pseudouridine synthase B from Vibrio parahaemolyticus serotype O3:K6 (strain RIMD 2210633).